The primary structure comprises 169 residues: Nascent polypeptide-associated complex subunit alpha (169 aa).

Residues 14 to 78 (NKNEKKAREM…AKIDNFSQKL (65 aa)) enclose the NAC-A/B domain. The tract at residues 85-128 (IQSVSKSPEEIQKDMQLAADQAGDESAKPAAAAEEDDEAPVDAG) is disordered. The UBA domain maps to 130 to 169 (LSAEDIELVASQANVSKNKAIKALKEHNGDIVNAIMALSK).

The protein belongs to the NAC-alpha family. As to quaternary structure, part of the nascent polypeptide-associated complex (NAC), consisting of EGD2 and EGD1. NAC associates with ribosomes via EGD1.

It is found in the cytoplasm. The protein localises to the nucleus. In terms of biological role, component of the nascent polypeptide-associated complex (NAC), a dynamic component of the ribosomal exit tunnel, protecting the emerging polypeptides from interaction with other cytoplasmic proteins to ensure appropriate nascent protein targeting. The NAC complex also promotes mitochondrial protein import by enhancing productive ribosome interactions with the outer mitochondrial membrane and blocks the inappropriate interaction of ribosomes translating non-secretory nascent polypeptides with translocation sites in the membrane of the endoplasmic reticulum. EGD2 may also be involved in transcription regulation. This is Nascent polypeptide-associated complex subunit alpha (EGD2) from Vanderwaltozyma polyspora (strain ATCC 22028 / DSM 70294 / BCRC 21397 / CBS 2163 / NBRC 10782 / NRRL Y-8283 / UCD 57-17) (Kluyveromyces polysporus).